The sequence spans 354 residues: Replication factor C subunit 5 (354 aa).

40–47 (YGPSGSGK) provides a ligand contact to ATP.

It belongs to the activator 1 small subunits family. Heterotetramer of subunits RFC2, RFC3, RFC4 and RFC5 that can form a complex with RFC1. Expressed in roots, leaves, shoot apical meristem (SAM), flag leaves and panicles.

Its subcellular location is the nucleus. In terms of biological role, may be involved in DNA replication and thus regulate cell proliferation. This chain is Replication factor C subunit 5 (RFC5), found in Oryza sativa subsp. japonica (Rice).